The sequence spans 485 residues: Glutamyl-tRNA(Gln) amidotransferase subunit A (485 aa).

Residues Lys-79 and Ser-154 each act as charge relay system in the active site. Ser-178 serves as the catalytic Acyl-ester intermediate.

Belongs to the amidase family. GatA subfamily. In terms of assembly, heterotrimer of A, B and C subunits.

The enzyme catalyses L-glutamyl-tRNA(Gln) + L-glutamine + ATP + H2O = L-glutaminyl-tRNA(Gln) + L-glutamate + ADP + phosphate + H(+). In terms of biological role, allows the formation of correctly charged Gln-tRNA(Gln) through the transamidation of misacylated Glu-tRNA(Gln) in organisms which lack glutaminyl-tRNA synthetase. The reaction takes place in the presence of glutamine and ATP through an activated gamma-phospho-Glu-tRNA(Gln). The polypeptide is Glutamyl-tRNA(Gln) amidotransferase subunit A (Geobacillus thermodenitrificans (strain NG80-2)).